A 125-amino-acid polypeptide reads, in one-letter code: Small ribosomal subunit protein uS12 (125 aa).

Residues 9 to 28 (RSERSKLKKKTKSPALKQCP) are disordered. D89 carries the post-translational modification 3-methylthioaspartic acid. The segment at 104–125 (AQGVKDRKQGRSKYGTKRPKKA) is disordered. The span at 113-125 (GRSKYGTKRPKKA) shows a compositional bias: basic residues.

It belongs to the universal ribosomal protein uS12 family. In terms of assembly, part of the 30S ribosomal subunit. Contacts proteins S8 and S17. May interact with IF1 in the 30S initiation complex.

With S4 and S5 plays an important role in translational accuracy. Functionally, interacts with and stabilizes bases of the 16S rRNA that are involved in tRNA selection in the A site and with the mRNA backbone. Located at the interface of the 30S and 50S subunits, it traverses the body of the 30S subunit contacting proteins on the other side and probably holding the rRNA structure together. The combined cluster of proteins S8, S12 and S17 appears to hold together the shoulder and platform of the 30S subunit. The polypeptide is Small ribosomal subunit protein uS12 (Rippkaea orientalis (strain PCC 8801 / RF-1) (Cyanothece sp. (strain PCC 8801))).